Consider the following 496-residue polypeptide: Transcription termination factor MTERF9, chloroplastic (496 aa).

The N-terminal 44 residues, 1 to 44 (MAGFSLYCFKNPRILFTLPSESPLFVLGSDKCSPATRRPSRKTR), are a transit peptide targeting the chloroplast. Disordered regions lie at residues 57–90 (IINP…DDDW) and 102–155 (YEKK…SWRL). Residues 74–90 (DSDEDDDDDDDDDDDDW) are compositionally biased toward acidic residues. Residues 105–123 (KKPKSHKQTIAKKSVKKGI) are compositionally biased toward basic residues. Basic and acidic residues predominate over residues 146 to 155 (SEKKKESWRL).

The protein belongs to the mTERF family.

The protein resides in the plastid. Its subcellular location is the chloroplast. Its function is as follows. Transcription termination factor required for processing and steady-state levels of plastid transcripts. May play a role in response to abiotic stresses. This Arabidopsis thaliana (Mouse-ear cress) protein is Transcription termination factor MTERF9, chloroplastic.